A 719-amino-acid polypeptide reads, in one-letter code: Leucine-rich repeat and fibronectin type-III domain-containing protein 5 (719 aa).

An N-terminal signal peptide occupies residues 1-17 (MEKILFYLFLIGIAVKA). Positions 18-51 (QICPKRCVCQILSPNLATLCAKKGLLFVPPNIDR) constitute an LRRNT domain. The Extracellular segment spans residues 18–529 (QICPKRCVCQ…MQSQFLGGTM (512 aa)). LRR repeat units lie at residues 52-73 (RTVELRLADNFVTNIKRKDFAN), 76-97 (SLVDLTLSRNTISFITPHAFAD), 100-121 (NLRALHLNSNRLTKITNDMFSG), 124-145 (NLHHLILNNNQLTLISSTAFDD), 148-169 (ALEELDLSYNNLETIPWDAVEK), 172-193 (SLHTLSLDHNMIDNIPKGTFSH), and 196-217 (KMTRLDVTSNKLQKLPPDPLFQ). N-linked (GlcNAc...) asparagine glycosylation occurs at N73. Positions 240-286 (NPLHCNCELLWLRRLSREDDLETCASPPLLTGRYFWSIPEEEFLCEP) constitute an LRRCT domain. Residues 287–373 (PLITRHTHEM…GEATQIVDLH (87 aa)) form the Ig-like domain. The cysteines at positions 308 and 357 are disulfide-linked. Residues N330, N339, N382, N406, and N452 are each glycosylated (N-linked (GlcNAc...) asparagine). The disordered stretch occupies residues 385–414 (NHIHEPDPGSSDISTSTKSGSNTSSSNGDT). The span at 393 to 414 (GSSDISTSTKSGSNTSSSNGDT) shows a compositional bias: low complexity. Positions 414-503 (TKLSQDKIVV…ITSLTATRVV (90 aa)) constitute a Fibronectin type-III domain. The helical transmembrane segment at 530–550 (IIIIGGIIVASVLVFIIILMI) threads the bilayer. Over 551–719 (RYKVCNNNGQ…VQETQRLELI (169 aa)) the chain is Cytoplasmic. Low complexity predominate over residues 615-627 (ETCSSQDSSTTTS). Residues 615-694 (ETCSSQDSST…SVTEGPTSKR (80 aa)) are disordered. 2 stretches are compositionally biased toward polar residues: residues 628–641 (ALPPSWTSSTSVSQ) and 649–677 (TKPSTEPQNEAVTNVESQNTNRNNSTALQ).

The protein belongs to the LRFN family. As to quaternary structure, can form heteromeric complexes with LRFN1, LRFN2, LRFN3 and LFRN4. Able to form homomeric complexes across cell junctions, between adjacent cells. Does not interact with DLG1, DLG2, DLG3 and DLG4.

It localises to the membrane. Functionally, cell adhesion molecule that mediates homophilic cell-cell adhesion in a Ca(2+)-independent manner. Promotes neurite outgrowth in hippocampal neurons. This Homo sapiens (Human) protein is Leucine-rich repeat and fibronectin type-III domain-containing protein 5 (LRFN5).